A 300-amino-acid chain; its full sequence is U6 snRNA methylphosphate capping enzyme Amus (300 aa).

Over residues 1–12 the composition is skewed to polar residues; the sequence is MDLENNNNTPLT. Disordered regions lie at residues 1–21 and 34–68; these read MDLENNNNTPLTGKQAEKCAK and VESKRLKKEESNVEATSRPPAQSPKKRLHLNGKPM. A compositionally biased stretch (basic and acidic residues) spans 34–44; the sequence is VESKRLKKEES. Residues 95–300 enclose the Bin3-type SAM domain; it reads DIRLDVLGTQ…KRPIQIFTKS (206 aa). 2 residues coordinate S-adenosyl-L-methionine: Asn119 and Asp140.

This sequence belongs to the methyltransferase superfamily.

It localises to the nucleus. Its function is as follows. Probable S-adenosyl-L-methionine-dependent methyltransferase that binds and stabilizes U6 snRNA, probably by adding a methylphosphate cap at its 5'-end. Required for U6 stability, but not stability of 7SK snRNAs, other miRNAs or tRNAs. U6 stabilization is required for efficient pre-mRNA splicing. Essential for organismal and germline development. The chain is U6 snRNA methylphosphate capping enzyme Amus from Drosophila melanogaster (Fruit fly).